A 556-amino-acid chain; its full sequence is Acetyl-coenzyme A thioesterase (556 aa).

Positions 6–118 (APGEVLMSQA…FSTFVVKPLG (113 aa)) constitute a HotDog ACOT-type 1 domain. Residue K34 is modified to N6-succinyllysine. Residues 54–56 (TAS) and 83–85 (STS) contribute to the CoA site. K97 carries the N6-succinyllysine modification. R145 contacts CoA. N6-succinyllysine occurs at positions 160 and 229. Residues 180 to 295 (MATSVQSIEL…FLIYNAVDDQ (116 aa)) enclose the HotDog ACOT-type 2 domain. 235–237 (KFR) lines the CoA pocket. The START domain occupies 341–550 (GTQWDISKKG…IKFIENATHD (210 aa)).

In terms of assembly, homodimer or homotetramer.

The protein resides in the cytoplasm. It localises to the cytosol. It catalyses the reaction acetyl-CoA + H2O = acetate + CoA + H(+). It carries out the reaction butanoyl-CoA + H2O = butanoate + CoA + H(+). The enzyme catalyses hexanoyl-CoA + H2O = hexanoate + CoA + H(+). The protein operates within lipid metabolism; fatty acid metabolism. With respect to regulation, allosterically regulated by ATP (activator) and ADP (inhibitor). Cold labile, it dissociates into inactive monomers at low temperature. Catalyzes the hydrolysis of acyl-CoAs into free fatty acids and coenzyme A (CoASH), regulating their respective intracellular levels. Preferentially hydrolyzes acetyl-CoA. This chain is Acetyl-coenzyme A thioesterase (Acot12), found in Rattus norvegicus (Rat).